The chain runs to 78 residues: MAASAALSAAAAAAALSGLAVRLSRSAAARGSYGAFCKGLTRTLLTFFDLAWRLRMNFPYFYIVASVMLNVRLQVRIE.

This chain is Small integral membrane protein 10-like protein 2A, found in Homo sapiens (Human).